The following is a 286-amino-acid chain: Pyridoxine 4-dehydrogenase (286 aa).

Catalysis depends on Tyr59, which acts as the Proton donor. 210-218 (FPLGGFTPL) provides a ligand contact to NADP(+).

This sequence belongs to the aldo/keto reductase family. Aldo/keto reductase 2 subfamily.

The catalysed reaction is pyridoxine + NADP(+) = pyridoxal + NADPH + H(+). It carries out the reaction pyridoxine + NAD(+) = pyridoxal + NADH + H(+). Functionally, catalyzes the NAD(P)H-dependent reduction of pyridoxal to pyridoxine in vitro. Is not able to reduce 4-pyridoxate, and to oxidize pyridoxine or pyridoxamine. Has Kemp eliminase activity towards the non-physiological substrate 5-nitrobenzisoxazole, producing 4-nitro-2-cyanophenol; this activity is not considered to be physiologically relevant. In Escherichia coli (strain K12), this protein is Pyridoxine 4-dehydrogenase.